The chain runs to 834 residues: Periplasmic nitrate reductase (834 aa).

The segment at residues 1 to 32 is a signal peptide (tat-type signal); it reads MTDMKIDRRQMLKLEAAAIAAAAAGMPSTSLA. Residues 44–100 enclose the 4Fe-4S Mo/W bis-MGD-type domain; the sequence is LKWDKAACRFCGTGCSVMVATKDNRVVATHGDIKAEVNRGLNCVKGYFLSKIMYGHD. Cysteine 51, cysteine 54, cysteine 58, and cysteine 86 together coordinate [4Fe-4S] cluster. Mo-bis(molybdopterin guanine dinucleotide) contacts are provided by residues lysine 88, glutamine 155, asparagine 180, cysteine 184, 217–224, 248–252, 267–269, methionine 378, glutamine 382, asparagine 488, 514–515, lysine 537, aspartate 564, and 724–733; these read WGSNMAEM, STFEH, QTD, SD, and TGRVVEHWHS. Residue tryptophan 800 coordinates substrate. Mo-bis(molybdopterin guanine dinucleotide) contacts are provided by asparagine 808 and lysine 825.

The protein belongs to the prokaryotic molybdopterin-containing oxidoreductase family. NasA/NapA/NarB subfamily. In terms of assembly, component of the periplasmic nitrate reductase NapAB complex composed of NapA and NapB. [4Fe-4S] cluster serves as cofactor. Mo-bis(molybdopterin guanine dinucleotide) is required as a cofactor. In terms of processing, predicted to be exported by the Tat system. The position of the signal peptide cleavage has not been experimentally proven.

It localises to the periplasm. The enzyme catalyses 2 Fe(II)-[cytochrome] + nitrate + 2 H(+) = 2 Fe(III)-[cytochrome] + nitrite + H2O. Functionally, catalytic subunit of the periplasmic nitrate reductase complex NapAB. Receives electrons from NapB and catalyzes the reduction of nitrate to nitrite. This chain is Periplasmic nitrate reductase, found in Bradyrhizobium sp. (strain BTAi1 / ATCC BAA-1182).